The chain runs to 248 residues: Ribosomal RNA small subunit methyltransferase G (248 aa).

Residues Gly-85, Phe-90, Ile-137–Glu-138, and Arg-156 contribute to the S-adenosyl-L-methionine site.

The protein belongs to the methyltransferase superfamily. RNA methyltransferase RsmG family.

The protein resides in the cytoplasm. In terms of biological role, specifically methylates the N7 position of a guanine in 16S rRNA. The polypeptide is Ribosomal RNA small subunit methyltransferase G (Parasynechococcus marenigrum (strain WH8102)).